Reading from the N-terminus, the 1344-residue chain is Protein stu1 (1344 aa).

Residues Leu-93–Val-131 form an HEAT 1 repeat. Positions His-265–Met-292 are disordered. Residues Val-508 to Gln-544 form an HEAT 2 repeat. 5 disordered regions span residues Arg-606 to Thr-637, Ala-651 to Arg-847, Leu-914 to Pro-945, Pro-984 to Ser-1004, and Ser-1031 to Arg-1054. Composition is skewed to polar residues over residues Val-691 to Ser-705 and Ala-735 to Asp-747. Over residues Gly-748–Gly-769 the composition is skewed to low complexity. Composition is skewed to polar residues over residues Phe-828–Arg-847 and Leu-914–Glu-942. Positions Ser-995–Ser-1004 are enriched in low complexity.

This sequence belongs to the CLASP family. In terms of assembly, interacts with microtubules.

It localises to the cytoplasm. Its subcellular location is the cytoskeleton. It is found in the nucleus. The protein resides in the spindle. Its function is as follows. Microtubule binding protein that promotes the stabilization of dynamic microtubules. Required for mitotic spindle formation. In Aspergillus fumigatus (strain ATCC MYA-4609 / CBS 101355 / FGSC A1100 / Af293) (Neosartorya fumigata), this protein is Protein stu1 (stu1).